Consider the following 204-residue polypeptide: 34 kDa membrane antigen (204 aa).

The first 19 residues, 1–19, serve as a signal peptide directing secretion; it reads MKRVSLLGSAAIFALVFSA. C20 carries the N-palmitoyl cysteine lipid modification. C20 carries the S-diacylglycerol cysteine lipid modification.

Belongs to the UPF0423 family.

The protein resides in the cell membrane. This antigen is a pathogen-specific membrane immunogen. This Treponema pallidum (strain Nichols) protein is 34 kDa membrane antigen (tpd).